The following is a 214-amino-acid chain: Cytochrome c biogenesis ATP-binding export protein CcmA (214 aa).

One can recognise an ABC transporter domain in the interval 8-212; that stretch reads LYAADLACLK…PPTVLDLSEV (205 aa). Residue 40–47 coordinates ATP; that stretch reads GPNGFGKT.

Belongs to the ABC transporter superfamily. CcmA exporter (TC 3.A.1.107) family. The complex is composed of two ATP-binding proteins (CcmA) and two transmembrane proteins (CcmB).

The protein localises to the cell inner membrane. The enzyme catalyses heme b(in) + ATP + H2O = heme b(out) + ADP + phosphate + H(+). Functionally, part of the ABC transporter complex CcmAB involved in the biogenesis of c-type cytochromes; once thought to export heme, this seems not to be the case, but its exact role is uncertain. Responsible for energy coupling to the transport system. The chain is Cytochrome c biogenesis ATP-binding export protein CcmA from Aromatoleum aromaticum (strain DSM 19018 / LMG 30748 / EbN1) (Azoarcus sp. (strain EbN1)).